A 535-amino-acid polypeptide reads, in one-letter code: Alpha-1,3-mannosyl-glycoprotein 4-beta-N-acetylglucosaminyltransferase A (535 aa).

The Cytoplasmic portion of the chain corresponds to 1-4; sequence MRLR. A helical; Signal-anchor for type II membrane protein membrane pass occupies residues 5–27; that stretch reads NGTVATALAFITSFLTLSWYTTW. Positions 28–63 form a coiled coil; that stretch reads QNGKEKLIAYQREFLALKERLRIAEHRISQRSSELN. The Lumenal portion of the chain corresponds to 28–535; the sequence is QNGKEKLIAY…NEIHIKKATN (508 aa). 2 N-linked (GlcNAc...) asparagine glycosylation sites follow: asparagine 77 and asparagine 458. Residue serine 474 is modified to Phosphoserine.

Belongs to the glycosyltransferase 54 family. A divalent metal cation is required as a cofactor. N-glycosylated.

The protein resides in the golgi apparatus membrane. It localises to the secreted. The enzyme catalyses N(4)-{beta-D-GlcNAc-(1-&gt;2)-alpha-D-Man-(1-&gt;3)-[beta-D-GlcNAc-(1-&gt;2)-alpha-D-Man-(1-&gt;6)]-beta-D-Man-(1-&gt;4)-beta-D-GlcNAc-(1-&gt;4)-beta-D-GlcNAc}-L-asparaginyl-[protein] + UDP-N-acetyl-alpha-D-glucosamine = N(4)-{beta-D-GlcNAc-(1-&gt;2)-[beta-D-GlcNAc-(1-&gt;4)]-alpha-D-Man-(1-&gt;3)-[beta-D-GlcNAc-(1-&gt;2)-alpha-D-Man-(1-&gt;6)]-beta-D-Man-(1-&gt;4)-beta-D-GlcNAc-(1-&gt;4)-beta-D-GlcNAc}-L-asparaginyl-[protein] + UDP + H(+). It carries out the reaction an N(4)-{beta-D-GlcNAc-(1-&gt;2)-alpha-D-Man-(1-&gt;3)-[alpha-D-Man-(1-&gt;6)]-beta-D-Man-(1-&gt;4)-beta-D-GlcNAc-(1-&gt;4)-beta-D-GlcNAc}-L-asparaginyl-[protein] + UDP-N-acetyl-alpha-D-glucosamine = an N(4)-{beta-D-GlcNAc-(1-&gt;2)-[beta-D-GlcNAc-(1-&gt;4)]-alpha-D-Man-(1-&gt;3)-[alpha-D-Man-(1-&gt;6)]-beta-D-Man-(1-&gt;4)-beta-D-GlcNAc-(1-&gt;4)-beta-D-GlcNAc}-L-asparaginyl-[protein] + UDP + H(+). The catalysed reaction is an N(4)-{beta-D-GlcNAc-(1-&gt;2)-alpha-D-Man-(1-&gt;3)-[beta-D-GlcNAc-(1-&gt;2)-[beta-D-GlcNAc-(1-&gt;6)]-alpha-D-Man-(1-&gt;6)]-beta-D-Man-(1-&gt;4)-beta-D-GlcNAc-(1-&gt;4)-beta-D-GlcNAc}-L-asparaginyl-[protein] + UDP-N-acetyl-alpha-D-glucosamine = an N(4)-{beta-D-GlcNAc-(1-&gt;2)-[beta-D-GlcNAc-(1-&gt;4)]-alpha-D-Man-(1-&gt;3)-[beta-D-GlcNAc-(1-&gt;2)-[beta-D-GlcNAc-(1-&gt;6)]-alpha-D-Man-(1-&gt;6)]-beta-D-Man-(1-&gt;4)-beta-D-GlcNAc-(1-&gt;4)-beta-D-GlcNAc}-L-asparaginyl-[protein] + UDP + H(+). It catalyses the reaction an N(4)-{beta-D-GlcNAc-(1-&gt;2)-alpha-D-Man-(1-&gt;3)-[beta-D-GlcNAc-(1-&gt;2)-alpha-D-Man-(1-&gt;6)]-beta-D-Man-(1-&gt;4)-beta-D-GlcNAc-(1-&gt;4)-[alpha-L-Fuc-(1-&gt;6)]-beta-D-GlcNAc}-L-asparaginyl-[protein] + UDP-N-acetyl-alpha-D-glucosamine = N(4)-{beta-D-GlcNAc-(1-&gt;2)-[beta-D-GlcNAc-(1-&gt;4)]-alpha-D-Man-(1-&gt;3)-[beta-D-GlcNAc-(1-&gt;2)-alpha-D-Man-(1-&gt;6)]-beta-D-Man-(1-&gt;4)-beta-D-GlcNAc-(1-&gt;4)-[alpha-L-Fuc-(1-&gt;6)]-beta-D-GlcNAc}-asparaginyl-[protein] + UDP + H(+). The enzyme catalyses an N(4)-{beta-D-GlcNAc-(1-&gt;2)-alpha-D-Man-(1-&gt;3)-[beta-D-Gal-(1-&gt;4)-beta-D-GlcNAc-(1-&gt;2)-alpha-D-Man-(1-&gt;6)]-beta-D-Man-(1-&gt;4)-beta-D-GlcNAc-(1-&gt;4)-beta-D-GlcNAc}-L-asparaginyl-[protein] + UDP-N-acetyl-alpha-D-glucosamine = an N(4)-{beta-D-GlcNAc-(1-&gt;2)-[beta-D-GlcNAc-(1-&gt;4)]-alpha-D-Man-(1-&gt;3)-[beta-D-Gal-(1-&gt;4)-beta-D-GlcNAc-(1-&gt;2)-alpha-D-Man-(1-&gt;6)]-beta-D-Man-(1-&gt;4)-beta-D-GlcNAc-(1-&gt;4)-beta-D-GlcNAc}-L-asparaginyl-[protein] + UDP + H(+). It carries out the reaction N(4)-{beta-D-GlcNAc-(1-&gt;2)-alpha-D-Man-(1-&gt;3)-[alpha-D-Man-(1-&gt;3)-{alpha-D-Man-(1-&gt;6)}-alpha-D-Man-(1-&gt;6)]-beta-D-Man-(1-&gt;4)-beta-D-GlcNAc-(1-&gt;4)-beta-D-GlcNAc}-asparaginyl-[protein] + UDP-N-acetyl-alpha-D-glucosamine = N(4)-{beta-D-GlcNAc-(1-&gt;2)-[beta-D-GlcNAc-(1-&gt;4)]-alpha-D-Man-(1-&gt;3)-[alpha-D-Man-(1-&gt;3)-{alpha-D-Man-(1-&gt;6)}-alpha-D-Man-(1-&gt;6)]-beta-D-Man-(1-&gt;4)-beta-D-GlcNAc-(1-&gt;4)-beta-D-GlcNAc}-asparaginyl-[protein] + UDP + H(+). The catalysed reaction is N(4)-{beta-D-GlcNAc-(1-&gt;2)-alpha-D-Man-(1-&gt;3)-beta-D-Man-(1-&gt;4)-beta-D-GlcNAc-(1-&gt;4)-beta-D-GlcNAc}-asparaginyl-[protein] + UDP-N-acetyl-alpha-D-glucosamine = N(4)-{beta-D-GlcNAc-(1-&gt;2)-[beta-D-GlcNAc-(1-&gt;4)]-alpha-D-Man-(1-&gt;3)-beta-D-Man-(1-&gt;4)-beta-D-GlcNAc-(1-&gt;4)-beta-D-GlcNAc}-asparaginyl-[protein] + UDP + H(+). The protein operates within protein modification; protein glycosylation. Inhibited by UDP. Glycosyltransferase that catalyze the transfer of GlcNAc from UDP-GlcNAc to the GlcNAcbeta1-2Manalpha1-3 arm of the core structure of N-linked glycans through a beta1-4 linkage and participates in the production of tri- and tetra-antennary N-linked sugar chains. Involved in glucose transport by mediating SLC2A2/GLUT2 glycosylation, thereby controlling cell-surface expression of SLC2A2 in pancreatic beta cells. This chain is Alpha-1,3-mannosyl-glycoprotein 4-beta-N-acetylglucosaminyltransferase A, found in Pongo abelii (Sumatran orangutan).